The sequence spans 483 residues: MSTLMVQGTTSDAGKSTLVTALCRWLWRQGVSVVPFKPQNMALNSAVTADGGEIGRAQAVQAQAANLAPHTDMNPVLLKPNSDTGSQVIIHGRAVTSMNAVAYHDYKAIAMQAVLASHERLKSAYQVVMVEGAGSPAEINLRAGDIANMGFAEAVDCPVLLIADINRGGVFAHLVGTLELLSPSEQARVKGFIINRFRGDLALLQPGLDWLEARTGKPVIGVLPYVLDLHLEAEDGIDQRQVGKVEQLLKVVVPVLPRISNHTDFDPLRLHPQVDLQFIGPGQAIPAADLIILPGSKSVRGDLAYLRSNGWDRAVARHLRYGGKVLGICGGLQMLGEQVHDPLGLEGAAGSSPGLGLLAFETVLEEEKQLRNVSGRLSLENAAVSGYEIHAGVTRGPALELAAVQLDDGRSDGACSADGQILGTYLHGLFETPAACSALLRWAGLEAVQEVDYHALRERDIERLADLVEHHLDTAALRRLCGL.

The GATase cobBQ-type domain maps to 248-435 (LLKVVVPVLP…LHGLFETPAA (188 aa)). The Nucleophile role is filled by C329. Residue H427 is part of the active site.

It belongs to the CobB/CobQ family. CobQ subfamily.

Its pathway is cofactor biosynthesis; adenosylcobalamin biosynthesis. Functionally, catalyzes amidations at positions B, D, E, and G on adenosylcobyrinic A,C-diamide. NH(2) groups are provided by glutamine, and one molecule of ATP is hydrogenolyzed for each amidation. The protein is Cobyric acid synthase of Pseudomonas fluorescens (strain ATCC BAA-477 / NRRL B-23932 / Pf-5).